A 580-amino-acid polypeptide reads, in one-letter code: 2-succinyl-5-enolpyruvyl-6-hydroxy-3-cyclohexene-1-carboxylate synthase (580 aa).

This sequence belongs to the TPP enzyme family. MenD subfamily. As to quaternary structure, homodimer. Mg(2+) is required as a cofactor. Requires Mn(2+) as cofactor. Thiamine diphosphate serves as cofactor.

The catalysed reaction is isochorismate + 2-oxoglutarate + H(+) = 5-enolpyruvoyl-6-hydroxy-2-succinyl-cyclohex-3-ene-1-carboxylate + CO2. It participates in quinol/quinone metabolism; 1,4-dihydroxy-2-naphthoate biosynthesis; 1,4-dihydroxy-2-naphthoate from chorismate: step 2/7. Its pathway is quinol/quinone metabolism; menaquinone biosynthesis. In terms of biological role, catalyzes the thiamine diphosphate-dependent decarboxylation of 2-oxoglutarate and the subsequent addition of the resulting succinic semialdehyde-thiamine pyrophosphate anion to isochorismate to yield 2-succinyl-5-enolpyruvyl-6-hydroxy-3-cyclohexene-1-carboxylate (SEPHCHC). This is 2-succinyl-5-enolpyruvyl-6-hydroxy-3-cyclohexene-1-carboxylate synthase from Listeria monocytogenes serotype 4b (strain F2365).